Reading from the N-terminus, the 1616-residue chain is S-layer-related protein (1616 aa).

Positions 1–30 are cleaved as a signal peptide; that stretch reads MKSLLRKWNGMMIIALVISLLTPAWGKASA. The BIG2 domain maps to 1115–1185; it reads VKALKLDRGT…GSGTVQATYE (71 aa). Disordered regions lie at residues 1191 to 1244, 1372 to 1455, 1523 to 1554, and 1585 to 1616; these read ARVS…DGRN, NKRN…GRAR, ARGR…REAG, and FAGG…ARPC. The segment covering 1199–1225 has biased composition (gly residues); the sequence is STGGGSDTGSGTGSGSGGGSAGGGGTA. Positions 1372-1387 are enriched in basic residues; it reads NKRNRRLRKLRPKNRK. Low complexity predominate over residues 1406 to 1416; that stretch reads PPECSASCPPA. The 65-residue stretch at 1438 to 1502 folds into the SLH domain; the sequence is WSPPRSASPT…ALDPAPAAAD (65 aa). A compositionally biased stretch (basic and acidic residues) spans 1536–1554; the sequence is RGADTRTDERDAHARREAG. A compositionally biased stretch (basic residues) spans 1594-1616; sequence GRTRGRTLRARPARLPVRKARPC.

It is found in the secreted. Its subcellular location is the cell wall. It localises to the S-layer. Functionally, the S-layer is a paracrystalline mono-layered assembly of proteins which coats the surface of bacteria. May play a role in the export of butirosin from the organism. The polypeptide is S-layer-related protein (butB) (Niallia circulans (Bacillus circulans)).